We begin with the raw amino-acid sequence, 876 residues long: Leucine--tRNA ligase (876 aa).

The short motif at proline 43–histidine 53 is the 'HIGH' region element. Residues lysine 632 to serine 636 carry the 'KMSKS' region motif. Position 635 (lysine 635) interacts with ATP.

The protein belongs to the class-I aminoacyl-tRNA synthetase family.

The protein resides in the cytoplasm. The enzyme catalyses tRNA(Leu) + L-leucine + ATP = L-leucyl-tRNA(Leu) + AMP + diphosphate. The chain is Leucine--tRNA ligase from Rhizobium etli (strain CIAT 652).